A 233-amino-acid polypeptide reads, in one-letter code: Glycolipid transfer protein 3 (233 aa).

A ganglioside GM3 (d18:1(4E)) contacts are provided by Asp79, Asn83, Trp126, and His165.

This sequence belongs to the GLTP family.

Functionally, may be involved in glycolipids transfer. The chain is Glycolipid transfer protein 3 from Arabidopsis thaliana (Mouse-ear cress).